A 406-amino-acid polypeptide reads, in one-letter code: MLFHSLSGPEVHGVIDEMDRRAKSEAPAISSAIDRGDTETTMPSISSDRAALCAGCGGKISDRYYLLAVDKQWHMRCLKCCECKLNLESELTCFSKDGSIYCKEDYYRRFSVQRCARCHLGISASEMVMRARDLVYHLNCFTCTTCNKMLTTGDHFGMKDSLVYCRLHFEALLQGEYPAHFNHADVAAAAAAAAAAKSAGLGAAGANPLGLPYYNGVGTVQKGRPRKRKSPGPGADLAAYNAALSCNENDAEHLDRDQPYPSSQKTKRMRTSFKHHQLRTMKSYFAINHNPDAKDLKQLAQKTGLTKRVLQVWFQNARAKFRRNLLRQENTGVDKSTDAALQTGTPSGPASELSNASLSPSSTPTTLTDLTSPTLPTVTSVLTSVPGNLEGHEPHSPSQTTLTNLF.

LIM zinc-binding domains are found at residues 53–105 (CAGC…CKED) and 115–168 (CARC…CRLH). The segment at 250 to 270 (DAEHLDRDQPYPSSQKTKRMR) is disordered. Residues 266–325 (TKRMRTSFKHHQLRTMKSYFAINHNPDAKDLKQLAQKTGLTKRVLQVWFQNARAKFRRNL) constitute a DNA-binding region (homeobox). The Nuclear localization signal signature appears at 307 to 323 (KRVLQVWFQNARAKFRR). Over residues 328–356 (QENTGVDKSTDAALQTGTPSGPASELSNA) the composition is skewed to polar residues. 2 disordered regions span residues 328 to 374 (QENT…TSPT) and 387 to 406 (GNLE…TNLF). Low complexity predominate over residues 357-374 (SLSPSSTPTTLTDLTSPT). The span at 396-406 (SPSQTTLTNLF) shows a compositional bias: polar residues.

In terms of assembly, interacts (via LIM domains) with CITED2. Interacts with POU4F2.

It localises to the nucleus. Its function is as follows. Acts as a transcriptional activator. Stimulates the promoter of the alpha-glycoprotein gene. Transcriptional regulatory protein involved in the control of cell differentiation in developing lymphoid and neural cell types. The polypeptide is LIM/homeobox protein Lhx2 (LHX2) (Homo sapiens (Human)).